The chain runs to 486 residues: Mitogen-activated protein kinase 17 (486 aa).

In terms of domain architecture, Protein kinase spans 16–307 (YQIQEVVGKG…AEEALADPYF (292 aa)). ATP is bound by residues 22–30 (VGKGSYGVV) and Lys45. The active-site Proton acceptor is Asp142. At Thr178 the chain carries Phosphothreonine. A TXY motif is present at residues 178–180 (TDY). Phosphotyrosine is present on Tyr180. Thr183 bears the Phosphothreonine mark. The disordered stretch occupies residues 386–455 (EEHNDDEEEH…LSSQKASQVD (70 aa)). A compositionally biased stretch (low complexity) spans 422 to 433 (SVHAQSSSASVV). Over residues 440–452 (PNTATGLSSQKAS) the composition is skewed to polar residues.

It belongs to the protein kinase superfamily. CMGC Ser/Thr protein kinase family. MAP kinase subfamily. Dually phosphorylated on Thr-178 and Tyr-180, which activates the enzyme.

It catalyses the reaction L-seryl-[protein] + ATP = O-phospho-L-seryl-[protein] + ADP + H(+). The catalysed reaction is L-threonyl-[protein] + ATP = O-phospho-L-threonyl-[protein] + ADP + H(+). Activated by threonine and tyrosine phosphorylation. This Arabidopsis thaliana (Mouse-ear cress) protein is Mitogen-activated protein kinase 17 (MPK17).